Reading from the N-terminus, the 455-residue chain is UDP-N-acetylmuramoylalanine--D-glutamate ligase (455 aa).

Residue 117–123 (GSAGKTT) coordinates ATP.

The protein belongs to the MurCDEF family.

The protein localises to the cytoplasm. The enzyme catalyses UDP-N-acetyl-alpha-D-muramoyl-L-alanine + D-glutamate + ATP = UDP-N-acetyl-alpha-D-muramoyl-L-alanyl-D-glutamate + ADP + phosphate + H(+). It participates in cell wall biogenesis; peptidoglycan biosynthesis. Functionally, cell wall formation. Catalyzes the addition of glutamate to the nucleotide precursor UDP-N-acetylmuramoyl-L-alanine (UMA). The chain is UDP-N-acetylmuramoylalanine--D-glutamate ligase from Symbiobacterium thermophilum (strain DSM 24528 / JCM 14929 / IAM 14863 / T).